A 236-amino-acid chain; its full sequence is Uridylate kinase (236 aa).

Lysine 10–glycine 13 is a binding site for ATP. UMP is bound at residue glycine 52. Positions 53 and 57 each coordinate ATP. Residues aspartate 72 and threonine 133–threonine 140 each bind UMP. Positions 160, 166, and 169 each coordinate ATP.

This sequence belongs to the UMP kinase family. In terms of assembly, homohexamer.

Its subcellular location is the cytoplasm. It carries out the reaction UMP + ATP = UDP + ADP. Its pathway is pyrimidine metabolism; CTP biosynthesis via de novo pathway; UDP from UMP (UMPK route): step 1/1. Its activity is regulated as follows. Inhibited by UTP. Functionally, catalyzes the reversible phosphorylation of UMP to UDP. In Polaromonas sp. (strain JS666 / ATCC BAA-500), this protein is Uridylate kinase.